Consider the following 342-residue polypeptide: Holliday junction branch migration complex subunit RuvB (342 aa).

The large ATPase domain (RuvB-L) stretch occupies residues 1 to 179; it reads MTSILSPEKS…FGIPMRLNFY (179 aa). ATP is bound by residues L18, R19, G60, K63, T64, T65, 126–128, R169, Y179, and R216; that span reads EDF. Residue T64 coordinates Mg(2+). Residues 180–250 are small ATPAse domain (RuvB-S); that stretch reads NTEELKKVLN…IANFGLNRLE (71 aa). The interval 253–342 is head domain (RuvB-H); sequence IIGLDSNDYR…HQFNIFNDNE (90 aa). The DNA site is built by R289, R308, and R313.

This sequence belongs to the RuvB family. In terms of assembly, homohexamer. Forms an RuvA(8)-RuvB(12)-Holliday junction (HJ) complex. HJ DNA is sandwiched between 2 RuvA tetramers; dsDNA enters through RuvA and exits via RuvB. An RuvB hexamer assembles on each DNA strand where it exits the tetramer. Each RuvB hexamer is contacted by two RuvA subunits (via domain III) on 2 adjacent RuvB subunits; this complex drives branch migration. In the full resolvosome a probable DNA-RuvA(4)-RuvB(12)-RuvC(2) complex forms which resolves the HJ.

Its subcellular location is the cytoplasm. The enzyme catalyses ATP + H2O = ADP + phosphate + H(+). Functionally, the RuvA-RuvB-RuvC complex processes Holliday junction (HJ) DNA during genetic recombination and DNA repair, while the RuvA-RuvB complex plays an important role in the rescue of blocked DNA replication forks via replication fork reversal (RFR). RuvA specifically binds to HJ cruciform DNA, conferring on it an open structure. The RuvB hexamer acts as an ATP-dependent pump, pulling dsDNA into and through the RuvAB complex. RuvB forms 2 homohexamers on either side of HJ DNA bound by 1 or 2 RuvA tetramers; 4 subunits per hexamer contact DNA at a time. Coordinated motions by a converter formed by DNA-disengaged RuvB subunits stimulates ATP hydrolysis and nucleotide exchange. Immobilization of the converter enables RuvB to convert the ATP-contained energy into a lever motion, pulling 2 nucleotides of DNA out of the RuvA tetramer per ATP hydrolyzed, thus driving DNA branch migration. The RuvB motors rotate together with the DNA substrate, which together with the progressing nucleotide cycle form the mechanistic basis for DNA recombination by continuous HJ branch migration. Branch migration allows RuvC to scan DNA until it finds its consensus sequence, where it cleaves and resolves cruciform DNA. In Rickettsia bellii (strain RML369-C), this protein is Holliday junction branch migration complex subunit RuvB.